Reading from the N-terminus, the 337-residue chain is S-adenosylmethionine:tRNA ribosyltransferase-isomerase (337 aa).

This sequence belongs to the QueA family. As to quaternary structure, monomer.

The protein resides in the cytoplasm. The enzyme catalyses 7-aminomethyl-7-carbaguanosine(34) in tRNA + S-adenosyl-L-methionine = epoxyqueuosine(34) in tRNA + adenine + L-methionine + 2 H(+). Its pathway is tRNA modification; tRNA-queuosine biosynthesis. Functionally, transfers and isomerizes the ribose moiety from AdoMet to the 7-aminomethyl group of 7-deazaguanine (preQ1-tRNA) to give epoxyqueuosine (oQ-tRNA). The sequence is that of S-adenosylmethionine:tRNA ribosyltransferase-isomerase from Legionella pneumophila (strain Lens).